Consider the following 421-residue polypeptide: Large ribosomal subunit protein uL4 (421 aa).

A2 bears the N-acetylalanine mark. K14 is subject to N6-acetyllysine. R97 carries the omega-N-methylarginine modification. The residue at position 106 (K106) is an N6-acetyllysine. K239 participates in a covalent cross-link: Glycyl lysine isopeptide (Lys-Gly) (interchain with G-Cter in SUMO2). K259 is subject to N6-acetyllysine. T266 carries the post-translational modification Phosphothreonine. S290 is subject to Phosphoserine. R300 is modified (citrulline). A Glycyl lysine isopeptide (Lys-Gly) (interchain with G-Cter in SUMO2) cross-link involves residue K327. K333 and K353 each carry N6-acetyllysine. The segment at 359–421 is disordered; that stretch reads EAKSEEKGVP…PTTEEKKPAA (63 aa). Position 361 is an N6-acetyllysine; alternate (K361). K361 is covalently cross-linked (Glycyl lysine isopeptide (Lys-Gly) (interchain with G-Cter in SUMO1); alternate). S362 is modified (phosphoserine). The segment covering 368–391 has biased composition (basic residues); sequence PGKKPRRKKGKKTVGVKKPKKPVV. Residues 401–421 show a composition bias toward basic and acidic residues; it reads PAADKKPAEKKPTTEEKKPAA.

It belongs to the universal ribosomal protein uL4 family. In terms of assembly, component of the large ribosomal subunit. May bind IPO9 with low affinity. Interacts with RBM3. Post-translationally, citrullinated by PADI4.

The protein resides in the cytoplasm. Its function is as follows. Component of the large ribosomal subunit. The ribosome is a large ribonucleoprotein complex responsible for the synthesis of proteins in the cell. The polypeptide is Large ribosomal subunit protein uL4 (RPL4) (Canis lupus familiaris (Dog)).